The following is a 466-amino-acid chain: 3-isopropylmalate dehydratase large subunit (466 aa).

[4Fe-4S] cluster contacts are provided by cysteine 347, cysteine 407, and cysteine 410.

Belongs to the aconitase/IPM isomerase family. LeuC type 1 subfamily. In terms of assembly, heterodimer of LeuC and LeuD. It depends on [4Fe-4S] cluster as a cofactor.

It carries out the reaction (2R,3S)-3-isopropylmalate = (2S)-2-isopropylmalate. It functions in the pathway amino-acid biosynthesis; L-leucine biosynthesis; L-leucine from 3-methyl-2-oxobutanoate: step 2/4. Functionally, catalyzes the isomerization between 2-isopropylmalate and 3-isopropylmalate, via the formation of 2-isopropylmaleate. The chain is 3-isopropylmalate dehydratase large subunit from Blochmanniella floridana.